A 245-amino-acid polypeptide reads, in one-letter code: Large ribosomal subunit protein uL2 (245 aa).

The segment at 198–245 is disordered; it reads VSHPHGGGSHKRPGKPTTVARTAPPGQKVGHIAARKTGRAKRRAATKR. Residues 230-245 are compositionally biased toward basic residues; it reads AARKTGRAKRRAATKR.

Belongs to the universal ribosomal protein uL2 family. As to quaternary structure, part of the 50S ribosomal subunit. Forms a bridge to the 30S subunit in the 70S ribosome.

One of the primary rRNA binding proteins. Required for association of the 30S and 50S subunits to form the 70S ribosome, for tRNA binding and peptide bond formation. It has been suggested to have peptidyltransferase activity; this is somewhat controversial. Makes several contacts with the 16S rRNA in the 70S ribosome. The protein is Large ribosomal subunit protein uL2 of Korarchaeum cryptofilum (strain OPF8).